The sequence spans 232 residues: UPF0173 metal-dependent hydrolase Msil_0741 (232 aa).

Belongs to the UPF0173 family.

This is UPF0173 metal-dependent hydrolase Msil_0741 from Methylocella silvestris (strain DSM 15510 / CIP 108128 / LMG 27833 / NCIMB 13906 / BL2).